The primary structure comprises 1187 residues: uncharacterized protein (1187 aa).

5 disordered regions span residues 302-405 (QKSQ…KPVG), 419-451 (QAFS…RASK), 511-551 (KAPG…LRLE), 1095-1134 (KSQR…KLPD), and 1148-1187 (PHLP…PASL). Positions 321-333 (LPLSGPAGAPPLG) are enriched in low complexity. Basic residues predominate over residues 352 to 361 (SRRKARHKAS). Low complexity-rich tracts occupy residues 422 to 435 (SPLL…SPAA) and 517 to 534 (GTTL…GEPP). Residues 1096–1107 (SQRTPQGEQSRN) show a composition bias toward polar residues. Residues 1160–1174 (TGGSFSSEGTGSQTS) show a composition bias toward low complexity.

This is an uncharacterized protein from Mus musculus (Mouse).